The sequence spans 959 residues: MTDMTLLNALSDDQDFAGRHNGPNAAQQNIMLKAISAESVEQLIAQTVPADIRLPEPMKLDPAQSEADMLTSLKAIASKNIINRSYIGQGYYNNLTPNVVLRNVLENPGWYTAYTPYQPEISQGRLESLLNYQQMIMDLTSMELANASLLDEATAAAEAMTLCLRAGKSKSKAFFVSNDLHPQTVDVVRTRAEYIGIEIITGSVEELDNHDVFGALVQYPGTTGSITDLTDIIEKAHAKKTLVAVASDLLALTLLKAPGEMGADVVIGSAQRFGVPMGFGGPHAGFMATKDKHKRTMPGRVIGVSKDARGNQSLRMAMQTREQHIRREKATSNICTAQALLANMAAFYALYHGPEGLRKIGRRVHHLTAILAAGLRNSGIELASDTFFDTITLNTGKKTDDFYKKALAAGINLRKFDVQLGISLDETTKVSDVEELLAIFTGNKLKASMFTADIAADEFAAIPESCRRTSKYLTHPVFNEHHSETQMMRYMKKLENKDYSLTHGMIPLGSCTMKLNAAAEMIPITWPEFGSLHPFAPADQTKGYQELASKLSEMLCSVTGYDAFSLQPNSGAQGEYAGLIAIQRYHQHNGDSHRNVCLIPSSAHGTNPASAAMVSMKVVVVGCDEKGNVDVEDLKVKIEKHRDNLSCIMITYPSTHGVYEEAVREVCDLVHDAGGQVYLDGANMNAQVGLTNPGFIGSDVSHLNLHKTFCIPHGGGGPGMGPIGVKSHLAPFLPGHVQSTSDEGQQYAVSAAELGSASILPISYAYIAMMGEEGLTEATKLAILNANYVMERLRPHYPVLYRGTEGRIAHECIIDIRPLKEASGISEEDVAKRLMDYGFHAPTMSFPVAGTLMIEPTESEDLAELDRFCDAMIAIRQEIARVQEGEWPIDDNPLVHAPHTQADLMETEWNRAYSREIACFPTDHTRASKYWPTVNRVDNVFGDRNLICSCPSIDSYIED.

K707 is modified (N6-(pyridoxal phosphate)lysine).

It belongs to the GcvP family. As to quaternary structure, the glycine cleavage system is composed of four proteins: P, T, L and H. It depends on pyridoxal 5'-phosphate as a cofactor.

It catalyses the reaction N(6)-[(R)-lipoyl]-L-lysyl-[glycine-cleavage complex H protein] + glycine + H(+) = N(6)-[(R)-S(8)-aminomethyldihydrolipoyl]-L-lysyl-[glycine-cleavage complex H protein] + CO2. In terms of biological role, the glycine cleavage system catalyzes the degradation of glycine. The P protein binds the alpha-amino group of glycine through its pyridoxal phosphate cofactor; CO(2) is released and the remaining methylamine moiety is then transferred to the lipoamide cofactor of the H protein. The sequence is that of Glycine dehydrogenase (decarboxylating) from Photobacterium profundum (strain SS9).